The chain runs to 347 residues: S-adenosylmethionine:tRNA ribosyltransferase-isomerase (347 aa).

It belongs to the QueA family. As to quaternary structure, monomer.

It is found in the cytoplasm. The catalysed reaction is 7-aminomethyl-7-carbaguanosine(34) in tRNA + S-adenosyl-L-methionine = epoxyqueuosine(34) in tRNA + adenine + L-methionine + 2 H(+). The protein operates within tRNA modification; tRNA-queuosine biosynthesis. Transfers and isomerizes the ribose moiety from AdoMet to the 7-aminomethyl group of 7-deazaguanine (preQ1-tRNA) to give epoxyqueuosine (oQ-tRNA). This is S-adenosylmethionine:tRNA ribosyltransferase-isomerase from Ectopseudomonas mendocina (strain ymp) (Pseudomonas mendocina).